Consider the following 138-residue polypeptide: Protein E6 (138 aa).

Zinc fingers lie at residues 25–61 (CNFCTGFLTYQELLEFDYKDFNLLWKDGFVFGCCAAC) and 98–134 (CLICLKRLDLLEKLDICAQHREFHRVRNRWKGVCRHC).

Belongs to the papillomaviridae E6 protein family. As to quaternary structure, forms homodimers. Interacts with ubiquitin-protein ligase UBE3A/E6-AP; this interaction stimulates UBE3A ubiquitin activity. Interacts with host BAK1.

It is found in the host cytoplasm. Its subcellular location is the host nucleus. In terms of biological role, plays a major role in the induction and maintenance of cellular transformation. E6 associates with host UBE3A/E6-AP ubiquitin-protein ligase and modulates its activity. Protects host keratinocytes from apoptosis by mediating the degradation of host BAK1. May also inhibit host immune response. This is Protein E6 from Homo sapiens (Human).